A 200-amino-acid chain; its full sequence is Proteasome subunit beta 2 (200 aa).

Positions 1 to 7 are cleaved as a propeptide — removed in mature form; by autocatalysis; it reads MEEKKTG. Catalysis depends on Thr-8, which acts as the Nucleophile.

This sequence belongs to the peptidase T1B family. In terms of assembly, the 20S proteasome core is composed of 14 alpha and 14 beta subunits that assemble into four stacked heptameric rings, resulting in a barrel-shaped structure. The two inner rings, each composed of seven catalytic beta subunits, are sandwiched by two outer rings, each composed of seven alpha subunits. The catalytic chamber with the active sites is on the inside of the barrel. Has a gated structure, the ends of the cylinder being occluded by the N-termini of the alpha-subunits. Is capped at one or both ends by the proteasome regulatory ATPase, PAN.

It localises to the cytoplasm. The catalysed reaction is Cleavage of peptide bonds with very broad specificity.. With respect to regulation, the formation of the proteasomal ATPase PAN-20S proteasome complex, via the docking of the C-termini of PAN into the intersubunit pockets in the alpha-rings, triggers opening of the gate for substrate entry. Interconversion between the open-gate and close-gate conformations leads to a dynamic regulation of the 20S proteasome proteolysis activity. Component of the proteasome core, a large protease complex with broad specificity involved in protein degradation. The chain is Proteasome subunit beta 2 from Thermococcus gammatolerans (strain DSM 15229 / JCM 11827 / EJ3).